A 461-amino-acid polypeptide reads, in one-letter code: Cysteine--tRNA ligase (461 aa).

Cys29 is a binding site for Zn(2+). Residues 31-41 carry the 'HIGH' region motif; sequence PTVYNYAHIGN. Residues Cys214, His239, and Glu243 each contribute to the Zn(2+) site. The 'KMSKS' region motif lies at 271 to 275; the sequence is KMSKS. Lys274 lines the ATP pocket.

This sequence belongs to the class-I aminoacyl-tRNA synthetase family. As to quaternary structure, monomer. Requires Zn(2+) as cofactor.

The protein resides in the cytoplasm. It catalyses the reaction tRNA(Cys) + L-cysteine + ATP = L-cysteinyl-tRNA(Cys) + AMP + diphosphate. The polypeptide is Cysteine--tRNA ligase (Hyphomonas neptunium (strain ATCC 15444)).